A 105-amino-acid chain; its full sequence is MAVKRSSKLTQTAMLKQILKRCSSLGKKQCYDEEGLPLDVPKGHFPVYVGEKRTRYIVPISFLTHPEFLILLQQAEEEFGFRHDMGGLTIPCEEVVFLSLTSMIR.

It belongs to the ARG7 family. Expressed in etiolated hypocotyls, cotyledons, leaves, flowers and siliques.

It localises to the cell membrane. Provide a mechanistic link between auxin and plasma membrane H(+)-ATPases (PM H(+)-ATPases, e.g. AHA1 and AHA2), and triggers PM H(+)-ATPases activity by promoting phosphorylation of their C-terminal autoinhibitory domain as a result of PP2C-D subfamily of type 2C phosphatases inhibition, thus leading to the acidification of the apoplast and the facilitation of solutes and water uptake to drive cell expansion. Triggers plant growth probably by promoting cell elongation. Regulates branch angles and bending. This chain is Protein SMALL AUXIN UP-REGULATED RNA 16, found in Arabidopsis thaliana (Mouse-ear cress).